A 144-amino-acid polypeptide reads, in one-letter code: Large ribosomal subunit protein uL11 (144 aa).

Belongs to the universal ribosomal protein uL11 family. In terms of assembly, part of the ribosomal stalk of the 50S ribosomal subunit. Interacts with L10 and the large rRNA to form the base of the stalk. L10 forms an elongated spine to which L12 dimers bind in a sequential fashion forming a multimeric L10(L12)X complex. One or more lysine residues are methylated.

Its function is as follows. Forms part of the ribosomal stalk which helps the ribosome interact with GTP-bound translation factors. This Streptomyces griseus subsp. griseus (strain JCM 4626 / CBS 651.72 / NBRC 13350 / KCC S-0626 / ISP 5235) protein is Large ribosomal subunit protein uL11.